Consider the following 108-residue polypeptide: Movement protein TGB2 (108 aa).

The Cytoplasmic portion of the chain corresponds to Met-1–Arg-14. The helical transmembrane segment at Ile-15–Arg-31 threads the bilayer. Residues Ser-32 to Asp-67 are Lumenal-facing. Residues Ile-68–Tyr-85 traverse the membrane as a helical segment. The Cytoplasmic portion of the chain corresponds to Ala-86–Gln-108.

This sequence belongs to the Tymovirales TGBp2 protein family.

It localises to the host endoplasmic reticulum membrane. In terms of biological role, plays a role in viral cell-to-cell propagation, by facilitating genome transport to neighboring plant cells through plasmosdesmata,. The sequence is that of Movement protein TGB2 from Strawberry mild yellow edge-associated virus (SMYEaV).